A 384-amino-acid chain; its full sequence is Glucose-1-phosphate adenylyltransferase (384 aa).

Alpha-D-glucose 1-phosphate contacts are provided by residues Y103, G168, 183–184, and S194; that span reads EK.

It belongs to the bacterial/plant glucose-1-phosphate adenylyltransferase family. In terms of assembly, homotetramer.

It catalyses the reaction alpha-D-glucose 1-phosphate + ATP + H(+) = ADP-alpha-D-glucose + diphosphate. It participates in glycan biosynthesis; glycogen biosynthesis. Involved in the biosynthesis of ADP-glucose, a building block required for the elongation reactions to produce glycogen. Catalyzes the reaction between ATP and alpha-D-glucose 1-phosphate (G1P) to produce pyrophosphate and ADP-Glc. The polypeptide is Glucose-1-phosphate adenylyltransferase (Fusobacterium nucleatum subsp. nucleatum (strain ATCC 25586 / DSM 15643 / BCRC 10681 / CIP 101130 / JCM 8532 / KCTC 2640 / LMG 13131 / VPI 4355)).